Reading from the N-terminus, the 254-residue chain is Ribonuclease PH (254 aa).

Phosphate-binding positions include R90 and 128–130 (GTR).

It belongs to the RNase PH family. In terms of assembly, homohexameric ring arranged as a trimer of dimers.

It catalyses the reaction tRNA(n+1) + phosphate = tRNA(n) + a ribonucleoside 5'-diphosphate. Phosphorolytic 3'-5' exoribonuclease that plays an important role in tRNA 3'-end maturation. Removes nucleotide residues following the 3'-CCA terminus of tRNAs; can also add nucleotides to the ends of RNA molecules by using nucleoside diphosphates as substrates, but this may not be physiologically important. Probably plays a role in initiation of 16S rRNA degradation (leading to ribosome degradation) during starvation. The sequence is that of Ribonuclease PH from Corynebacterium kroppenstedtii (strain DSM 44385 / JCM 11950 / CIP 105744 / CCUG 35717).